The chain runs to 462 residues: Protoheme IX farnesyltransferase, mitochondrial (462 aa).

The transit peptide at 1 to 30 (MSYFPRTYAHLMRNVLAHNKGNIYLQIGTQ) directs the protein to the mitochondrion. The next 7 helical transmembrane spans lie at 158–178 (TILV…PASV), 234–254 (LIGT…VAIL), 274–294 (IINT…GWAA), 298–318 (LSHP…FPHF), 352–372 (YSIL…TDWY), 373–393 (YQID…KFYW), and 425–445 (FMAS…HKKG).

This sequence belongs to the UbiA prenyltransferase family. As to quaternary structure, forms ~370 kDa homooligomeric complexes.

It is found in the mitochondrion. Its subcellular location is the mitochondrion membrane. The enzyme catalyses heme b + (2E,6E)-farnesyl diphosphate + H2O = Fe(II)-heme o + diphosphate. The protein operates within porphyrin-containing compound metabolism; heme O biosynthesis; heme O from protoheme: step 1/1. Positively regulated by the hydroxylated intermediate (heme I) formed at the subsequent step, or by HAS/COX15 itself. Functionally, catalyzes the first reaction in the biosynthesis of heme A, a prosthetic group of mitochondrial cytochrome c oxidase (CcO). Heme A is synthesized from heme B by two sequential enzymatic reactions catalyzed by heme O synthase (HOS/COX10) and heme A synthase (HAS/COX15). HOS converts heme B (protoheme IX) to heme O by substitution of the vinyl group on carbon 2 of heme B porphyrin ring with a hydroxyethyl farnesyl side group. In Saccharomyces cerevisiae (strain ATCC 204508 / S288c) (Baker's yeast), this protein is Protoheme IX farnesyltransferase, mitochondrial (COX10).